A 306-amino-acid polypeptide reads, in one-letter code: Polyadenylate-binding protein 2 (306 aa).

Positions 1 to 12 are enriched in low complexity; it reads MAAAAAAAAAAG. Positions 1-115 are disordered; the sequence is MAAAAAAAAA…EGDPGDGAIE (115 aa). Alanine 2 carries the post-translational modification N-acetylalanine. The interval 2 to 145 is interaction with SKIP; that stretch reads AAAAAAAAAA…LKELQNEVEK (144 aa). Arginine 17 bears the Omega-N-methylarginine mark. Phosphoserine is present on serine 19. Over residues 30-47 the composition is skewed to gly residues; it reads GAGGEAGEGAPGGAGDYG. The segment covering 51–72 has biased composition (acidic residues); it reads ESEELEPEELLLEPEPEPEPEE. At serine 52 the chain carries Phosphoserine. Positions 77–87 are enriched in pro residues; the sequence is PRAPPGAPGPG. Residues 115–151 adopt a coiled-coil conformation; that stretch reads EDPELEAIKARVREMEEEAEKLKELQNEVEKQMNMSP. The stimulates PAPOLA stretch occupies residues 119 to 147; it reads LEAIKARVREMEEEAEKLKELQNEVEKQM. 2 positions are modified to phosphoserine: serine 150 and serine 235. The necessary for homooligomerization stretch occupies residues 155-306; it reads NAGPVIMSIE…ARATSWYSPY (152 aa). An RRM domain is found at 172 to 249; sequence RSIYVGNVDY…RQIKVIPKRT (78 aa). Asymmetric dimethylarginine; alternate is present on residues arginine 238, arginine 259, and arginine 263. Omega-N-methylarginine; alternate occurs at positions 238, 259, and 263. Asymmetric dimethylarginine is present on residues arginine 265, arginine 267, arginine 269, arginine 277, arginine 279, arginine 287, arginine 289, arginine 291, arginine 294, arginine 296, and arginine 298. The interaction with PAPOLA stretch occupies residues 286-306; it reads SRPRGRVYRGRARATSWYSPY.

In terms of assembly, monomer and homooligomer. Binds RNA as a monomer and oligomerizes when bound to poly(A). Associates in a ternary complex with CPSF4 and NS/NS1 and interaction with NS/NS1, blocks nuclear export of host cell mRNAs. Associates in a single complex with SKIP and MYOD1 and interacts with SKIP in differentiated myocytes. Interacts with NUDT21/CPSF5. Identified in a IGF2BP1-dependent mRNP granule complex containing untranslated mRNAs. Interacts with PAPOLA, but only in presence of oligo(A) RNA. Interacts with transportin. May interact with SETX. Interacts (via RRM domain and C-terminal arginine-rich region) with ZFP36 (via hypophosphorylated form); this interaction occurs in the nucleus in a RNA-independent manner, decreases in presence of single-stranded poly(A) RNA-oligomer and in a p38-dependent-manner and may down-regulated RNA poly(A) polymerase activity. Component of the poly(A) tail exosome targeting (PAXT) complex composed of PABPN1, ZFC3H1 and MTREX. Interacts with ZFC3H1 in a RNase-insensitive manner. Interacts with FRG1. Interacts with ZC3H11A. Arginine dimethylation is asymmetric and involves PRMT1 and PRMT3. It does not influence the RNA binding properties. As to expression, ubiquitous.

It is found in the nucleus. It localises to the cytoplasm. Its subcellular location is the nucleus speckle. Its function is as follows. Involved in the 3'-end formation of mRNA precursors (pre-mRNA) by the addition of a poly(A) tail of 200-250 nt to the upstream cleavage product. Stimulates poly(A) polymerase (PAPOLA) conferring processivity on the poly(A) tail elongation reaction and also controls the poly(A) tail length. Increases the affinity of poly(A) polymerase for RNA. Is also present at various stages of mRNA metabolism including nucleocytoplasmic trafficking and nonsense-mediated decay (NMD) of mRNA. Cooperates with SKIP to synergistically activate E-box-mediated transcription through MYOD1 and may regulate the expression of muscle-specific genes. Binds to poly(A) and to poly(G) with high affinity. May protect the poly(A) tail from degradation. Subunit of the trimeric poly(A) tail exosome targeting (PAXT) complex, a complex that directs a subset of long and polyadenylated poly(A) RNAs for exosomal degradation. The RNA exosome is fundamental for the degradation of RNA in eukaryotic nuclei. Substrate targeting is facilitated by its cofactor MTREX, which links to RNA-binding protein adapters. This is Polyadenylate-binding protein 2 (PABPN1) from Bos taurus (Bovine).